Consider the following 265-residue polypeptide: Oxygen-evolving enhancer protein 2-2, chloroplastic (265 aa).

A chloroplast-targeting transit peptide spans 1 to 79; the sequence is MASTQCFLHH…VGSKVSPADA (79 aa).

Belongs to the PsbP family.

It is found in the plastid. The protein localises to the chloroplast thylakoid membrane. Functionally, may be involved in the regulation of photosystem II. This chain is Oxygen-evolving enhancer protein 2-2, chloroplastic (PSBP2), found in Nicotiana tabacum (Common tobacco).